The chain runs to 327 residues: Glycoprotein integral membrane protein 1 (327 aa).

An N-terminal signal peptide occupies residues methionine 1–glycine 23. Over tryptophan 24–proline 259 the chain is Extracellular. Asparagine 44, asparagine 62, and asparagine 146 each carry an N-linked (GlcNAc...) asparagine glycan. Residues valine 260–alanine 280 traverse the membrane as a helical segment. The Cytoplasmic segment spans residues valine 281–isoleucine 327.

It localises to the membrane. This is Glycoprotein integral membrane protein 1 (Ginm1) from Mus musculus (Mouse).